A 129-amino-acid chain; its full sequence is Small ribosomal subunit protein uS11c (129 aa).

This sequence belongs to the universal ribosomal protein uS11 family. Part of the 30S ribosomal subunit.

The protein resides in the plastid. It localises to the chloroplast. In Gracilaria tenuistipitata var. liui (Red alga), this protein is Small ribosomal subunit protein uS11c.